We begin with the raw amino-acid sequence, 966 residues long: Mitogen-activated protein kinase kinase kinase 13 (966 aa).

The tract at residues 1–59 is disordered; the sequence is MANPQEHLSCSSSPRLPLSENKTFNGLQDDLAPMGSHASPKLLKDQQEKGMVQTELAEG. Positions 8–19 are enriched in low complexity; that stretch reads LSCSSSPRLPLS. Positions 168 to 409 constitute a Protein kinase domain; the sequence is ISELQWLGSG…FRQTLMHLDI (242 aa). Residues 174–182 and Lys-195 each bind ATP; that span reads LGSGAQGAV. Asp-279 functions as the Proton acceptor in the catalytic mechanism. 2 leucine-zipper regions span residues 433-454 and 486-507; these read VKKH…DEEL and LSAI…EQAV. Residues 457–496 adopt a coiled-coil conformation; that stretch reads RRREELRHALDIREHYERKLERANNLYMELSAIMLQLEMR. Disordered stretches follow at residues 561-663, 743-874, and 937-966; these read EVAP…GQDI, LDVP…DELA, and QFEE…SATW. Over residues 567-581 the composition is skewed to low complexity; sequence SPLSGSPKLSSSSSK. The segment covering 582–594 has biased composition (basic residues); the sequence is SRYRSKPRHRRGN. Polar residues predominate over residues 609-622; that stretch reads QPAQEDSPHPTSLH. A compositionally biased stretch (low complexity) spans 629–642; it reads PSSQHHNLLQQQYQ. Residues 814–827 are compositionally biased toward acidic residues; sequence DSSEEEEGEVDSEV. Residues 815-828 are acidic; the sequence is SSEEEEGEVDSEVE. Polar residues predominate over residues 840 to 855; the sequence is SSCQSYSTFSSENFSV. Over residues 939–950 the composition is skewed to acidic residues; sequence EESDCDSSDGEC. A compositionally biased stretch (polar residues) spans 954-966; the sequence is TVRTNKHYSSATW.

It belongs to the protein kinase superfamily. Ser/Thr protein kinase family. As to quaternary structure, homodimer; forms dimers through the leucine-zipper motif. Interacts with the C-terminus of MAPK8IP1 through the kinase catalytic domain. Binds PRDX3. Associates with the IKK complex through the kinase domain. Requires Mg(2+) as cofactor. In terms of processing, autophosphorylated on serine and threonine residues.

Its subcellular location is the cytoplasm. The protein resides in the membrane. The catalysed reaction is L-seryl-[protein] + ATP = O-phospho-L-seryl-[protein] + ADP + H(+). It carries out the reaction L-threonyl-[protein] + ATP = O-phospho-L-threonyl-[protein] + ADP + H(+). With respect to regulation, activated by autophosphorylation and homodimerization. Functionally, activates the JUN N-terminal pathway through activation of the MAP kinase kinase MAP2K7. Acts synergistically with PRDX3 to regulate the activation of NF-kappa-B in the cytosol. This activation is kinase-dependent and involves activating the IKK complex, the IKBKB-containing complex that phosphorylates inhibitors of NF-kappa-B. This chain is Mitogen-activated protein kinase kinase kinase 13 (MAP3K13), found in Bos taurus (Bovine).